The primary structure comprises 353 residues: MSIQVKNIEKHFGAFHALKNISLDFPEGQLVALLGPSGCGKTTLLRIIAGLESADEGKILLEGADATNIHVRERQVGFVFQHYALFRHMSVFDNIAFGLRVRPRSTRPSEAEIKKRVTRLLDLVQLGFLADRYPSQLSGGQRQRIALARALAVEPRVLLLDEPFGALDAKVRKELRRWLRTLHDELHITSIFVTHDQEEALEVADQIIVMNKGNVEQIGSPREVYEKPATPFVFDFLGQANRFDGQYHENKVELGEDQIILPNVSEVPHGKVIAFARPDELHIHAQPQDNTIQATFLREVWIAGKVVAELQDRNGRLIEIALSPDEARLHLFRPNQTVWISVSQLHLFADHVA.

In terms of domain architecture, ABC transporter spans 3 to 237 (IQVKNIEKHF…PATPFVFDFL (235 aa)). 35–42 (GPSGCGKT) is a binding site for ATP.

It belongs to the ABC transporter superfamily. Sulfate/tungstate importer (TC 3.A.1.6) family. The complex is composed of two ATP-binding proteins (CysA), two transmembrane proteins (CysT and CysW) and a solute-binding protein (CysP).

Its subcellular location is the cell inner membrane. The enzyme catalyses sulfate(out) + ATP + H2O = sulfate(in) + ADP + phosphate + H(+). The catalysed reaction is thiosulfate(out) + ATP + H2O = thiosulfate(in) + ADP + phosphate + H(+). Functionally, part of the ABC transporter complex CysAWTP involved in sulfate/thiosulfate import. Responsible for energy coupling to the transport system. The chain is Sulfate/thiosulfate import ATP-binding protein CysA from Acinetobacter baylyi (strain ATCC 33305 / BD413 / ADP1).